A 355-amino-acid chain; its full sequence is UDP-N-acetylglucosamine--N-acetylmuramyl-(pentapeptide) pyrophosphoryl-undecaprenol N-acetylglucosamine transferase (355 aa).

UDP-N-acetyl-alpha-D-glucosamine contacts are provided by residues 11-13, arginine 164, serine 194, and glutamine 289; that span reads TAG.

Belongs to the glycosyltransferase 28 family. MurG subfamily.

The protein resides in the cell membrane. The catalysed reaction is di-trans,octa-cis-undecaprenyl diphospho-N-acetyl-alpha-D-muramoyl-L-alanyl-D-glutamyl-meso-2,6-diaminopimeloyl-D-alanyl-D-alanine + UDP-N-acetyl-alpha-D-glucosamine = di-trans,octa-cis-undecaprenyl diphospho-[N-acetyl-alpha-D-glucosaminyl-(1-&gt;4)]-N-acetyl-alpha-D-muramoyl-L-alanyl-D-glutamyl-meso-2,6-diaminopimeloyl-D-alanyl-D-alanine + UDP + H(+). Its pathway is cell wall biogenesis; peptidoglycan biosynthesis. Functionally, cell wall formation. Catalyzes the transfer of a GlcNAc subunit on undecaprenyl-pyrophosphoryl-MurNAc-pentapeptide (lipid intermediate I) to form undecaprenyl-pyrophosphoryl-MurNAc-(pentapeptide)GlcNAc (lipid intermediate II). The polypeptide is UDP-N-acetylglucosamine--N-acetylmuramyl-(pentapeptide) pyrophosphoryl-undecaprenol N-acetylglucosamine transferase (Lachnoclostridium phytofermentans (strain ATCC 700394 / DSM 18823 / ISDg) (Clostridium phytofermentans)).